Consider the following 251-residue polypeptide: Hydroxyacylglutathione hydrolase (251 aa).

The Zn(2+) site is built by His-53, His-55, Asp-57, His-58, His-110, Asp-127, and His-165.

It belongs to the metallo-beta-lactamase superfamily. Glyoxalase II family. Monomer. Zn(2+) is required as a cofactor.

It catalyses the reaction an S-(2-hydroxyacyl)glutathione + H2O = a 2-hydroxy carboxylate + glutathione + H(+). It functions in the pathway secondary metabolite metabolism; methylglyoxal degradation; (R)-lactate from methylglyoxal: step 2/2. Its function is as follows. Thiolesterase that catalyzes the hydrolysis of S-D-lactoyl-glutathione to form glutathione and D-lactic acid. The protein is Hydroxyacylglutathione hydrolase of Shigella boydii serotype 4 (strain Sb227).